Consider the following 89-residue polypeptide: Small ribosomal subunit protein uS15 (89 aa).

It belongs to the universal ribosomal protein uS15 family. As to quaternary structure, part of the 30S ribosomal subunit. Forms a bridge to the 50S subunit in the 70S ribosome, contacting the 23S rRNA.

One of the primary rRNA binding proteins, it binds directly to 16S rRNA where it helps nucleate assembly of the platform of the 30S subunit by binding and bridging several RNA helices of the 16S rRNA. Functionally, forms an intersubunit bridge (bridge B4) with the 23S rRNA of the 50S subunit in the ribosome. This is Small ribosomal subunit protein uS15 from Dechloromonas aromatica (strain RCB).